A 394-amino-acid polypeptide reads, in one-letter code: Tubulin-like protein CetZ5 (394 aa).

GTP-binding positions include 10–14 (QAGGN), 110–112 (GTG), Glu-142, Asn-169, and Asn-187.

The protein belongs to the CetZ family.

The protein resides in the cytoplasm. Involved in cell shape control. The protein is Tubulin-like protein CetZ5 of Haloferax volcanii (strain ATCC 29605 / DSM 3757 / JCM 8879 / NBRC 14742 / NCIMB 2012 / VKM B-1768 / DS2) (Halobacterium volcanii).